The following is a 793-amino-acid chain: Copalyl diphosphate synthase CPS1, chloroplastic (793 aa).

The transit peptide at 1–59 directs the protein to the chloroplast; that stretch reads MASLSSTILSRSPAARRRITPASAKLHRPECFATSAWMGSSSKNLSLSYQLNHKKISVA. K238 is a substrate binding site. D370 and D372 together coordinate Mg(2+). The DXDD motif signature appears at 370–373; the sequence is DIDD. K457 is a substrate binding site.

This sequence belongs to the terpene synthase family. It depends on Mg(2+) as a cofactor.

The protein resides in the plastid. It localises to the chloroplast. The enzyme catalyses (2E,6E,10E)-geranylgeranyl diphosphate = (+)-copalyl diphosphate. The protein operates within secondary metabolite biosynthesis; terpenoid biosynthesis. Its function is as follows. Involved in tanshinone biosynthesis in hairy roots. Catalyzes the conversion of geranylgeranyl diphosphate (GGPP) to copalyl diphosphate (CPP). The sequence is that of Copalyl diphosphate synthase CPS1, chloroplastic from Salvia miltiorrhiza (Chinese sage).